A 671-amino-acid polypeptide reads, in one-letter code: MENIRFEVQLTILHVEGLWKNGLLRSLKPYLLISVDDDQFIKTNVASGTLRLSWGFTQKLTVSPQSIILLQLFDEKQKNETSDGFVGLGAAVVNSFLPFNNPKDDYKTRITLRSPSGSYRGSVVCLFKRSKFLPEELPADKSQICTDIIDDASGCAWETRIDEFGHVYYLKSPQLSVISAISHEKLENLTPKQLKEVFSQFLFNNQSKSSLKINLEYKVIKHLLEHYPLALSVRQQVAVEKGPLPAGWEMRLSEDYHVYFVDHSTKTTTWSDPRDNVVASDSVSENTDSIQQINDEYQRKIAYMYDRPEMAVNDAQLQLKVSRATTFEDAYDIISKLSVSDMKKKLLIRFRNEDGLDYGGVSREFFYILSHAIFNPGYSLFEYATDDNYGLQISPLSSVNPDFRSYFRFVGRVMGLAIYHRRYLDVQFVLPFYKRILQKPLCLEDVKDVDEVYYESLKWIKNNDVDESLCLNFSVEENRFGESVTVDLIPNGRNIAVNNQNKMNYLKALTEHKLVTSTEEQFNALKGGLNELIPDSVLQIFNENELDTLLNGKRDIDVQDWKRFTDYRSYTETDDIVIWFWELLSEWSPEKKAKLLQFATGTSRLPLSGFKDMHGSDGPRKFTIEKVGHISQLPKAHTCFNRLDIPPYNSKEELEQKLTIAIQETAGFGTE.

The C2 domain occupies 1 to 112; sequence MENIRFEVQL…KDDYKTRITL (112 aa). Residues 242–275 form the WW domain; it reads GPLPAGWEMRLSEDYHVYFVDHSTKTTTWSDPRD. Residues 338-671 form the HECT domain; it reads SVSDMKKKLL…IQETAGFGTE (334 aa). The Glycyl thioester intermediate role is filled by Cys-639.

As to quaternary structure, interacts with the E2 ubiquitin-conjugating enzyme ubc4.

It localises to the membrane. The protein localises to the cytoplasm. It carries out the reaction S-ubiquitinyl-[E2 ubiquitin-conjugating enzyme]-L-cysteine + [acceptor protein]-L-lysine = [E2 ubiquitin-conjugating enzyme]-L-cysteine + N(6)-ubiquitinyl-[acceptor protein]-L-lysine.. It functions in the pathway protein modification; protein ubiquitination. Functionally, E3 ubiquitin-protein ligase which accepts ubiquitin from an E2 ubiquitin-conjugating enzyme in the form of a thioester and then directly transfers the ubiquitin to targeted substrates. The sequence is that of E3 ubiquitin-protein ligase pub2 (pub2) from Schizosaccharomyces pombe (strain 972 / ATCC 24843) (Fission yeast).